We begin with the raw amino-acid sequence, 288 residues long: Bifunctional protein FolD (288 aa).

NADP(+)-binding positions include 166 to 168 (GRS), S191, and I232.

The protein belongs to the tetrahydrofolate dehydrogenase/cyclohydrolase family. As to quaternary structure, homodimer.

The enzyme catalyses (6R)-5,10-methylene-5,6,7,8-tetrahydrofolate + NADP(+) = (6R)-5,10-methenyltetrahydrofolate + NADPH. The catalysed reaction is (6R)-5,10-methenyltetrahydrofolate + H2O = (6R)-10-formyltetrahydrofolate + H(+). Its pathway is one-carbon metabolism; tetrahydrofolate interconversion. In terms of biological role, catalyzes the oxidation of 5,10-methylenetetrahydrofolate to 5,10-methenyltetrahydrofolate and then the hydrolysis of 5,10-methenyltetrahydrofolate to 10-formyltetrahydrofolate. This chain is Bifunctional protein FolD, found in Rickettsia massiliae (strain Mtu5).